Consider the following 225-residue polypeptide: tRNA (guanine-N(7)-)-methyltransferase (225 aa).

Positions 56, 81, 108, and 131 each coordinate S-adenosyl-L-methionine. The active site involves Asp-131. Residues Lys-135, Asp-167, and Thr-204–Glu-207 contribute to the substrate site.

It belongs to the class I-like SAM-binding methyltransferase superfamily. TrmB family.

It catalyses the reaction guanosine(46) in tRNA + S-adenosyl-L-methionine = N(7)-methylguanosine(46) in tRNA + S-adenosyl-L-homocysteine. Its pathway is tRNA modification; N(7)-methylguanine-tRNA biosynthesis. Catalyzes the formation of N(7)-methylguanine at position 46 (m7G46) in tRNA. The sequence is that of tRNA (guanine-N(7)-)-methyltransferase from Legionella pneumophila (strain Corby).